The sequence spans 159 residues: Oleosin Cor a 12 (159 aa).

Positions 1-10 (MADRPQQLQV) are enriched in polar residues. Residues 1-24 (MADRPQQLQVHPQRGHGHYEGGIK) are disordered. A run of 3 helical transmembrane segments spans residues 45–65 (VGGT…IGLL), 70–90 (LFII…LAVA), and 92–112 (FLSS…VLNY).

Belongs to the oleosin family. As to expression, expressed in seeds.

The protein resides in the lipid droplet. Its subcellular location is the membrane. Its function is as follows. May have a structural role to stabilize the lipid body during desiccation of the seed by preventing coalescence of the oil. Probably interacts with both lipid and phospholipid moieties of lipid bodies. May also provide recognition signals for specific lipase anchorage in lipolysis during seedling growth. In Corylus avellana (European hazel), this protein is Oleosin Cor a 12.